The following is a 31-amino-acid chain: Cliotide T17 (31 aa).

A cross-link (cyclopeptide (Gly-Asn)) is located at residues 1–31 (GTVPCGESCVFIPCITGIAGCSCKNKVCYLN). 3 disulfides stabilise this stretch: Cys-5–Cys-21, Cys-9–Cys-23, and Cys-14–Cys-28.

Contains 3 disulfide bonds. In terms of processing, this is a cyclic peptide. In terms of tissue distribution, expressed in root nodules but not in seed.

Probably participates in a plant defense mechanism. The polypeptide is Cliotide T17 (Clitoria ternatea (Butterfly pea)).